The sequence spans 311 residues: Telomere-binding protein I1 homolog (311 aa).

Belongs to the chordopoxvirinae I1 family.

It is found in the virion. Late DNA-binding protein which binds to the hairpin form of the viral telomeric sequence. Required for the production of mature virions (MV). This chain is Telomere-binding protein I1 homolog, found in Fowlpox virus (strain NVSL) (FPV).